The following is a 208-amino-acid chain: Kininogen-1b (208 aa).

The N-terminal stretch at 1–23 is a signal peptide; sequence MRLWFCLSFFIVLCLEHFPETLA. The segment covering 27–44 has biased composition (basic and acidic residues); that stretch reads NVPESEEKTEQYLRDLPK. The tract at residues 27 to 208 is disordered; that stretch reads NVPESEEKTE…RGKFHSQSHV (182 aa).

This sequence belongs to the bradykinin-related peptide family. As to expression, expressed by the skin glands.

It is found in the secreted. Its function is as follows. In vitro, produces constriction of guinea pig ileum smooth muscle. May target bradykinin receptors (BDKRB). This Bombina maxima (Giant fire-bellied toad) protein is Kininogen-1b.